The following is a 915-amino-acid chain: Coiled-coil domain-containing protein 57 (915 aa).

Residues 1 to 502 are centrosomal targeting domain; sequence MLPLGSEPAL…MHGLPRPGAQ (502 aa). 4 coiled-coil regions span residues 92-173, 214-422, 456-483, and 521-548; these read VSEL…QRQE, LEAL…LERD, KSQVAAKLQETEQALQEQEVVLKAVTLE, and IQRLREQNTSLRNAIAQMRKEMEALSHQ. Disordered stretches follow at residues 555–574, 606–653, and 724–915; these read TAAESTDANQPDPEAGGDAA, PLKM…QAGP, and QHGG…NIMD. A microtubule binding domain region spans residues 606–915; the sequence is PLKMSSPHAE…PKIRNYNIMD (310 aa). Polar residues predominate over residues 613–627; the sequence is HAESQPSVRTSTETT. A compositionally biased stretch (low complexity) spans 628–652; the sequence is GGSAQAGQAGGSVQAGQAGGSVQAG. Positions 745-758 are enriched in basic and acidic residues; sequence GREDAKSAEDEAPS. Polar residues-rich tracts occupy residues 781-794, 819-830, and 841-852; these read PKTQHSIHTVTCKS, SHSSSSFASGTL, and SSPSGVTSQGDS. Residues 879–891 show a composition bias toward low complexity; that stretch reads KTAAQAKAKTTGA.

As to quaternary structure, interacts with CEP63; the interaction is required for their location to proximal end of centrioles. Interacts with microtubules.

It localises to the cytoplasm. The protein localises to the cytoskeleton. Its subcellular location is the microtubule organizing center. It is found in the centrosome. The protein resides in the centriolar satellite. It localises to the centriole. The protein localises to the spindle. Its function is as follows. Pleiotropic regulator of centriole duplication, mitosis, and ciliogenesis. Critical interface between centrosome and microtubule-mediated cellular processes. Centriole duplication protein required for recruitment of CEP63, CEP152, and PLK4 to the centrosome. Independent of its centrosomal targeting, localizes to and interacts with microtubules and regulates microtubule nucleation, stability, and mitotic progression. The sequence is that of Coiled-coil domain-containing protein 57 from Homo sapiens (Human).